The chain runs to 322 residues: MMAEKHGVLLVNLGTPSAATPAAVKAYLAEFLSDRRVVDLPSWQWQPLLRGLILPRRAPRVARLYQSIWTAQGSPLLYYSQRLCDGLQARLGEAIPVVLGMSYGEPSLDRALSALSDAGVTQLTVVPLYPQYSCSTSAAVFDGVAAWLARQRCIPALRFVRDYAQHPAYIAALCQRIRCSIAEHGQPDILLFSYHGIPQRYAAEGDDYPQRCLATTQAVVQALGLMPSQYAVSFQSRFGREPWLTPYTDETVVALATGGVRHLQVICPGFAADCLETLEEIAVQNREAFLAAGGHHFAYIPALNDDDMQITLLQQLVAATPA.

2 residues coordinate Fe cation: His-195 and Glu-276.

It belongs to the ferrochelatase family.

The protein localises to the cytoplasm. It carries out the reaction heme b + 2 H(+) = protoporphyrin IX + Fe(2+). It participates in porphyrin-containing compound metabolism; protoheme biosynthesis; protoheme from protoporphyrin-IX: step 1/1. Functionally, catalyzes the ferrous insertion into protoporphyrin IX. This chain is Ferrochelatase, found in Edwardsiella ictaluri (strain 93-146).